The primary structure comprises 485 residues: ATP synthase subunit beta 1 (485 aa).

Residue 157–164 (GGAGVGKT) participates in ATP binding.

Belongs to the ATPase alpha/beta chains family. As to quaternary structure, F-type ATPases have 2 components, CF(1) - the catalytic core - and CF(0) - the membrane proton channel. CF(1) has five subunits: alpha(3), beta(3), gamma(1), delta(1), epsilon(1). CF(0) has three main subunits: a(1), b(2) and c(9-12). The alpha and beta chains form an alternating ring which encloses part of the gamma chain. CF(1) is attached to CF(0) by a central stalk formed by the gamma and epsilon chains, while a peripheral stalk is formed by the delta and b chains.

The protein localises to the cell inner membrane. It catalyses the reaction ATP + H2O + 4 H(+)(in) = ADP + phosphate + 5 H(+)(out). In terms of biological role, produces ATP from ADP in the presence of a proton gradient across the membrane. The catalytic sites are hosted primarily by the beta subunits. The chain is ATP synthase subunit beta 1 from Psychromonas ingrahamii (strain DSM 17664 / CCUG 51855 / 37).